Here is a 451-residue protein sequence, read N- to C-terminus: Chromosomal replication initiator protein DnaA (451 aa).

The tract at residues 1-72 is domain I, interacts with DnaA modulators; sequence MQSIEDIWQE…ANILQEITGR (72 aa). The segment at 72–108 is domain II; it reads RLFDVRFIDGEQEENFEYTVIKPNPALDEDGIEIGKH. The tract at residues 109–325 is domain III, AAA+ region; it reads MLNPRYVFDT…GALIRVVAYS (217 aa). ATP is bound by residues G153, G155, K156, and T157. Positions 326–451 are domain IV, binds dsDNA; the sequence is SLVNKDITAG…KNLRKSQNMF (126 aa).

The protein belongs to the DnaA family. In terms of assembly, oligomerizes as a right-handed, spiral filament on DNA at oriC.

It localises to the cytoplasm. Plays an essential role in the initiation and regulation of chromosomal replication. ATP-DnaA binds to the origin of replication (oriC) to initiate formation of the DNA replication initiation complex once per cell cycle. Binds the DnaA box (a 9 base pair repeat at the origin) and separates the double-stranded (ds)DNA. Forms a right-handed helical filament on oriC DNA; dsDNA binds to the exterior of the filament while single-stranded (ss)DNA is stabiized in the filament's interior. The ATP-DnaA-oriC complex binds and stabilizes one strand of the AT-rich DNA unwinding element (DUE), permitting loading of DNA polymerase. After initiation quickly degrades to an ADP-DnaA complex that is not apt for DNA replication. Binds acidic phospholipids. The polypeptide is Chromosomal replication initiator protein DnaA (Listeria welshimeri serovar 6b (strain ATCC 35897 / DSM 20650 / CCUG 15529 / CIP 8149 / NCTC 11857 / SLCC 5334 / V8)).